Reading from the N-terminus, the 108-residue chain is Replication restart protein PriB (108 aa).

The 101-residue stretch at 8-108 (IDNSFSVMGV…LHAEQIEFID (101 aa)) folds into the SSB domain.

This sequence belongs to the PriB family. As to quaternary structure, homodimer. Interacts with PriA and DnaT. Component of the replication restart primosome. Primosome assembly occurs via a 'hand-off' mechanism. PriA binds to replication forks, subsequently PriB then DnaT bind; DnaT then displaces ssDNA to generate the helicase loading substrate.

In terms of biological role, involved in the restart of stalled replication forks, which reloads the replicative helicase on sites other than the origin of replication; the PriA-PriB pathway is the major replication restart pathway. During primosome assembly it facilitates complex formation between PriA and DnaT on DNA; stabilizes PriA on DNA. Stimulates the DNA unwinding activity of PriA helicase. The chain is Replication restart protein PriB from Haemophilus influenzae (strain ATCC 51907 / DSM 11121 / KW20 / Rd).